The following is a 278-amino-acid chain: Shikimate dehydrogenase (NADP(+)) (278 aa).

Shikimate-binding positions include 19–21 (SRS) and Thr-66. Residue Lys-70 is the Proton acceptor of the active site. Positions 91 and 106 each coordinate shikimate. Residues 129 to 133 (GAGGA) and Phe-221 contribute to the NADP(+) site. Tyr-223 provides a ligand contact to shikimate. Gly-242 is a binding site for NADP(+).

The protein belongs to the shikimate dehydrogenase family. As to quaternary structure, homodimer.

It catalyses the reaction shikimate + NADP(+) = 3-dehydroshikimate + NADPH + H(+). It functions in the pathway metabolic intermediate biosynthesis; chorismate biosynthesis; chorismate from D-erythrose 4-phosphate and phosphoenolpyruvate: step 4/7. Functionally, involved in the biosynthesis of the chorismate, which leads to the biosynthesis of aromatic amino acids. Catalyzes the reversible NADPH linked reduction of 3-dehydroshikimate (DHSA) to yield shikimate (SA). The polypeptide is Shikimate dehydrogenase (NADP(+)) (Anaeromyxobacter sp. (strain K)).